The sequence spans 264 residues: TLC domain-containing protein 4-B (264 aa).

The next 6 helical transmembrane spans lie at 6-26 (VYVV…VSPV), 50-70 (LVST…LWYD), 84-104 (LVKL…LLLA), 110-130 (MGDV…GYVL), 169-189 (LVVA…IAVM), and 210-230 (LAIQ…NIIW). The region spanning 41-243 (NKLNDWNSRL…IARGCYKVIT (203 aa)) is the TLC domain.

The protein belongs to the TLCD4 family.

It localises to the membrane. The protein is TLC domain-containing protein 4-B (tlcd4b) of Danio rerio (Zebrafish).